A 433-amino-acid chain; its full sequence is Probable carboxypeptidase ATEG_02905 (433 aa).

The signal sequence occupies residues M1 to A18. The interval P20 to D40 is disordered. N-linked (GlcNAc...) asparagine glycosylation occurs at N92. D161 provides a ligand contact to Zn(2+). E193 acts as the Proton acceptor in catalysis. E194 lines the Zn(2+) pocket.

Belongs to the peptidase M20A family. It depends on Zn(2+) as a cofactor.

The protein resides in the secreted. The chain is Probable carboxypeptidase ATEG_02905 from Aspergillus terreus (strain NIH 2624 / FGSC A1156).